A 597-amino-acid polypeptide reads, in one-letter code: K(+) efflux antiporter 6 (597 aa).

Residues methionine 1–proline 35 form the signal peptide. Helical transmembrane passes span leucine 177–cysteine 197, proline 201–isoleucine 221, methionine 224–leucine 244, valine 257–valine 277, glycine 287–methionine 307, isoleucine 321–leucine 341, methionine 351–leucine 371, leucine 396–leucine 416, isoleucine 440–asparagine 460, valine 461–isoleucine 481, threonine 499–serine 519, and leucine 543–leucine 563.

Belongs to the monovalent cation:proton antiporter 2 (CPA2) transporter (TC 2.A.37) family. KEA (TC 2.A.37.1) subfamily. Expressed in roots, stems, leaves, flowers and silique.

It localises to the golgi apparatus membrane. The protein localises to the golgi apparatus. It is found in the trans-Golgi network membrane. The protein resides in the prevacuolar compartment membrane. Its subcellular location is the endomembrane system. The catalysed reaction is K(+)(in) + H(+)(out) = K(+)(out) + H(+)(in). In terms of biological role, electroneutral K(+)/H(+) efflux antiporter involved in K(+) homeostasis and osmotic adjustment. Together with KEA4 and KEA5, promotes growth and development, and facilitates endosomal pH and ions homeostasis, as well as salt tolerance (e.g. K(+), NaCl and LiCl), probably by supporting cell wall biosynthesis during rapid etiolated seedling growth. This Arabidopsis thaliana (Mouse-ear cress) protein is K(+) efflux antiporter 6.